The following is a 251-amino-acid chain: Flap endonuclease Xni (251 aa).

D104 contacts Mg(2+). Positions 160–249 (VQPQQLPDYW…IDGNLQQLRL (90 aa)) constitute a 5'-3' exonuclease domain. Residues L171, A172, P180, V182, and I185 each contribute to the K(+) site. Residues 184–189 (GIGPKS) are interaction with DNA.

It belongs to the Xni family. Mg(2+) is required as a cofactor. K(+) serves as cofactor.

Its function is as follows. Has flap endonuclease activity. During DNA replication, flap endonucleases cleave the 5'-overhanging flap structure that is generated by displacement synthesis when DNA polymerase encounters the 5'-end of a downstream Okazaki fragment. The chain is Flap endonuclease Xni from Escherichia coli O17:K52:H18 (strain UMN026 / ExPEC).